The chain runs to 242 residues: MNTEKPSVAHNVDHNEIAKFEAVASRWWDLKGEFKPLHRINPLRLGYITERSGGLFGKKVLDVGCGGGILAESMAREGATVTGLDMGFEPLQVAKLHALESGIEVEYVQETVEEHAAKHAQQYDVVTCMEMLEHVPDPQSVVHACAQLVKPGGEVFFSTLNRNGKSWLMAVVGAEYILRMVPKGTHDVKKFIKPAELLSWVDETVLKEQHITGLHYNPITNTFKLGPGVDVNYMLHTRAKKA.

The S-adenosyl-L-methionine site is built by Arg-44, Gly-64, Asp-85, and Met-129.

It belongs to the methyltransferase superfamily. UbiG/COQ3 family.

It carries out the reaction a 3-demethylubiquinol + S-adenosyl-L-methionine = a ubiquinol + S-adenosyl-L-homocysteine + H(+). The catalysed reaction is a 3-(all-trans-polyprenyl)benzene-1,2-diol + S-adenosyl-L-methionine = a 2-methoxy-6-(all-trans-polyprenyl)phenol + S-adenosyl-L-homocysteine + H(+). It functions in the pathway cofactor biosynthesis; ubiquinone biosynthesis. O-methyltransferase that catalyzes the 2 O-methylation steps in the ubiquinone biosynthetic pathway. The protein is Ubiquinone biosynthesis O-methyltransferase of Salmonella typhi.